We begin with the raw amino-acid sequence, 439 residues long: Trigger factor (439 aa).

Residues 162–247 enclose the PPIase FKBP-type domain; the sequence is GDTVTIDYVG…IHEVKAKQLP (86 aa).

The protein belongs to the FKBP-type PPIase family. Tig subfamily.

The protein localises to the cytoplasm. The enzyme catalyses [protein]-peptidylproline (omega=180) = [protein]-peptidylproline (omega=0). In terms of biological role, involved in protein export. Acts as a chaperone by maintaining the newly synthesized protein in an open conformation. Functions as a peptidyl-prolyl cis-trans isomerase. This is Trigger factor from Lactobacillus delbrueckii subsp. bulgaricus (strain ATCC 11842 / DSM 20081 / BCRC 10696 / JCM 1002 / NBRC 13953 / NCIMB 11778 / NCTC 12712 / WDCM 00102 / Lb 14).